Consider the following 559-residue polypeptide: Glucose-6-phosphate isomerase (559 aa).

Catalysis depends on E352, which acts as the Proton donor. Residues H383 and K511 contribute to the active site.

This sequence belongs to the GPI family.

It localises to the cytoplasm. The catalysed reaction is alpha-D-glucose 6-phosphate = beta-D-fructose 6-phosphate. It functions in the pathway carbohydrate biosynthesis; gluconeogenesis. The protein operates within carbohydrate degradation; glycolysis; D-glyceraldehyde 3-phosphate and glycerone phosphate from D-glucose: step 2/4. Functionally, catalyzes the reversible isomerization of glucose-6-phosphate to fructose-6-phosphate. The chain is Glucose-6-phosphate isomerase from Chlorobaculum tepidum (strain ATCC 49652 / DSM 12025 / NBRC 103806 / TLS) (Chlorobium tepidum).